The chain runs to 130 residues: D-ribose pyranase (130 aa).

The Proton donor role is filled by H20. Residues D28, H97, and 119-121 contribute to the substrate site; that span reads YAN.

This sequence belongs to the RbsD / FucU family. RbsD subfamily. Homodecamer.

It is found in the cytoplasm. The catalysed reaction is beta-D-ribopyranose = beta-D-ribofuranose. The protein operates within carbohydrate metabolism; D-ribose degradation; D-ribose 5-phosphate from beta-D-ribopyranose: step 1/2. Its function is as follows. Catalyzes the interconversion of beta-pyran and beta-furan forms of D-ribose. The protein is D-ribose pyranase of Heliobacterium modesticaldum (strain ATCC 51547 / Ice1).